The chain runs to 102 residues: Small ribosomal subunit protein uS10 (102 aa).

This sequence belongs to the universal ribosomal protein uS10 family. In terms of assembly, part of the 30S ribosomal subunit.

Involved in the binding of tRNA to the ribosomes. The chain is Small ribosomal subunit protein uS10 from Lactococcus lactis subsp. lactis (strain IL1403) (Streptococcus lactis).